Consider the following 69-residue polypeptide: Small, acid-soluble spore protein 1 (69 aa).

The protein belongs to the alpha/beta-type SASP family.

SASP are bound to spore DNA. They are double-stranded DNA-binding proteins that cause DNA to change to an a-like conformation. They protect the DNA backbone from chemical and enzymatic cleavage and are thus involved in dormant spore's high resistance to UV light. This chain is Small, acid-soluble spore protein 1 (Su-1), found in Sporosarcina ureae.